A 353-amino-acid chain; its full sequence is Photosystem II D2 protein (353 aa).

T2 is modified (N-acetylthreonine). T2 carries the post-translational modification Phosphothreonine. Residues 41 to 61 (CAYFALGGWFTGTTFVTSWYT) form a helical membrane-spanning segment. H118 serves as a coordination point for chlorophyll a. A helical membrane pass occupies residues 125 to 141 (GFMLRQFELARSVQLRP). Residues Q130 and N143 each contribute to the pheophytin a site. The chain crosses the membrane as a helical span at residues 153–166 (VFVSVFLIYPLGQS). H198 lines the chlorophyll a pocket. Residues 208–228 (AALLCAIHGATVENTLFEDGD) form a helical membrane-spanning segment. A plastoquinone is bound by residues H215 and F262. Residue H215 coordinates Fe cation. H269 contributes to the Fe cation binding site. The helical transmembrane segment at 279-295 (GLWMSAIGVVGLALNLR) threads the bilayer.

This sequence belongs to the reaction center PufL/M/PsbA/D family. PSII is composed of 1 copy each of membrane proteins PsbA, PsbB, PsbC, PsbD, PsbE, PsbF, PsbH, PsbI, PsbJ, PsbK, PsbL, PsbM, PsbT, PsbX, PsbY, PsbZ, Psb30/Ycf12, at least 3 peripheral proteins of the oxygen-evolving complex and a large number of cofactors. It forms dimeric complexes. Requires The D1/D2 heterodimer binds P680, chlorophylls that are the primary electron donor of PSII, and subsequent electron acceptors. It shares a non-heme iron and each subunit binds pheophytin, quinone, additional chlorophylls, carotenoids and lipids. There is also a Cl(-1) ion associated with D1 and D2, which is required for oxygen evolution. The PSII complex binds additional chlorophylls, carotenoids and specific lipids. as cofactor.

Its subcellular location is the plastid. It is found in the chloroplast thylakoid membrane. It carries out the reaction 2 a plastoquinone + 4 hnu + 2 H2O = 2 a plastoquinol + O2. In terms of biological role, photosystem II (PSII) is a light-driven water:plastoquinone oxidoreductase that uses light energy to abstract electrons from H(2)O, generating O(2) and a proton gradient subsequently used for ATP formation. It consists of a core antenna complex that captures photons, and an electron transfer chain that converts photonic excitation into a charge separation. The D1/D2 (PsbA/PsbD) reaction center heterodimer binds P680, the primary electron donor of PSII as well as several subsequent electron acceptors. D2 is needed for assembly of a stable PSII complex. The polypeptide is Photosystem II D2 protein (Agrostis stolonifera (Creeping bentgrass)).